The primary structure comprises 284 residues: MSGLRTLLGLGLLVSSSRFPRVVARGGPRCPGPAWWAARPMHLGDSTMAGGTVKYLSQEEAQAVDEELFNEYKFSVDQLMELAGLSCATAIAKAYPLSSFGSNPPAVLVICGPGNNGGDGLVCARHLKLFGYEPKIHYPKKPNKPLFDALVTQCQKMDIPFLPEVPPEPMLIDELYELVVDAIFGFSFKGAVREPFGTILSIMNGLTVPIASIDIPSGWDVEKGNPEGIRPDLLISLTAPKKAATLFKGRHHYLGGRFVPSDLEKKYQLNLPPYPGTDCVLQLQ.

The N-terminal 55 residues, 1-55 (MSGLRTLLGLGLLVSSSRFPRVVARGGPRCPGPAWWAARPMHLGDSTMAGGTVKY), are a transit peptide targeting the mitochondrion. In terms of domain architecture, YjeF N-terminal spans 61–271 (AQAVDEELFN…DLEKKYQLNL (211 aa)). 115 to 119 (NNGGD) lines the (6S)-NADPHX pocket. Asn116 lines the K(+) pocket. The residue at position 140 (Lys140) is an N6-succinyllysine. Asp181 is a K(+) binding site. Residues 185–191 (GFSFKGA) and Asp214 contribute to the (6S)-NADPHX site. Position 217 (Ser217) interacts with K(+).

It belongs to the NnrE/AIBP family. Homodimer. Interacts with APOA1 and APOA2. The cofactor is K(+). Undergoes physiological phosphorylation during sperm capacitation, downstream to PKA activation.

It is found in the mitochondrion. The protein localises to the secreted. The enzyme catalyses (6R)-NADHX = (6S)-NADHX. It carries out the reaction (6R)-NADPHX = (6S)-NADPHX. Its function is as follows. Catalyzes the epimerization of the S- and R-forms of NAD(P)HX, a damaged form of NAD(P)H that is a result of enzymatic or heat-dependent hydration. This is a prerequisite for the S-specific NAD(P)H-hydrate dehydratase to allow the repair of both epimers of NAD(P)HX. Accelerates cholesterol efflux from endothelial cells to high-density lipoprotein (HDL) and thereby regulates angiogenesis. This is NAD(P)H-hydrate epimerase from Monodelphis domestica (Gray short-tailed opossum).